The sequence spans 933 residues: Valine--tRNA ligase (933 aa).

The short motif at Pro58–His68 is the 'HIGH' region element. The short motif at Lys556–Ser560 is the 'KMSKS' region element. Residue Lys559 coordinates ATP. 2 coiled-coil regions span residues Val807 to Val833 and Glu864 to Lys933.

Belongs to the class-I aminoacyl-tRNA synthetase family. ValS type 1 subfamily. Monomer.

It is found in the cytoplasm. The enzyme catalyses tRNA(Val) + L-valine + ATP = L-valyl-tRNA(Val) + AMP + diphosphate. Catalyzes the attachment of valine to tRNA(Val). As ValRS can inadvertently accommodate and process structurally similar amino acids such as threonine, to avoid such errors, it has a 'posttransfer' editing activity that hydrolyzes mischarged Thr-tRNA(Val) in a tRNA-dependent manner. This chain is Valine--tRNA ligase, found in Prochlorococcus marinus (strain SARG / CCMP1375 / SS120).